Reading from the N-terminus, the 797-residue chain is Ubiquitin carboxyl-terminal hydrolase 14 (797 aa).

Residues 156-266 form a UBP-type; degenerate zinc finger; the sequence is LISEHALTLQ…EHLAHFGIDF (111 aa). 4 residues coordinate Zn(2+): Cys180, Cys183, Cys200, and His213. The region spanning 308 to 796 is the USP domain; sequence TGLVNLGNSC…MGYVYFFQRL (489 aa). Cys317 (nucleophile) is an active-site residue. UBA domains lie at 613-654 and 670-710; these read VANE…LLSH and DIDQ…VFNN. His758 serves as the catalytic Proton acceptor.

It belongs to the peptidase C19 family. As to expression, constitutively and ubiquitously expressed (at protein level).

The catalysed reaction is Thiol-dependent hydrolysis of ester, thioester, amide, peptide and isopeptide bonds formed by the C-terminal Gly of ubiquitin (a 76-residue protein attached to proteins as an intracellular targeting signal).. In terms of biological role, recognizes and hydrolyzes the peptide bond at the C-terminal Gly of ubiquitin. Involved in the processing of poly-ubiquitin precursors as well as that of ubiquitinated proteins. Involved in seed and embryo development. This Arabidopsis thaliana (Mouse-ear cress) protein is Ubiquitin carboxyl-terminal hydrolase 14 (UBP14).